Reading from the N-terminus, the 360-residue chain is Phospho-N-acetylmuramoyl-pentapeptide-transferase (360 aa).

10 helical membrane passes run 18–38, 73–93, 94–114, 134–154, 168–188, 199–219, 239–259, 263–283, 288–308, and 338–358; these read VFSY…FISL, TMGG…WADL, SNIY…VGFV, YFWQ…IAQG, LLPQ…VGTS, GLAI…AYVT, LVIV…FNTY, VFMG…IAIL, LVLF…ILQV, and VIVR…ATLK.

Belongs to the glycosyltransferase 4 family. MraY subfamily. Mg(2+) serves as cofactor.

It localises to the cell inner membrane. It carries out the reaction UDP-N-acetyl-alpha-D-muramoyl-L-alanyl-gamma-D-glutamyl-meso-2,6-diaminopimeloyl-D-alanyl-D-alanine + di-trans,octa-cis-undecaprenyl phosphate = di-trans,octa-cis-undecaprenyl diphospho-N-acetyl-alpha-D-muramoyl-L-alanyl-D-glutamyl-meso-2,6-diaminopimeloyl-D-alanyl-D-alanine + UMP. It participates in cell wall biogenesis; peptidoglycan biosynthesis. Functionally, catalyzes the initial step of the lipid cycle reactions in the biosynthesis of the cell wall peptidoglycan: transfers peptidoglycan precursor phospho-MurNAc-pentapeptide from UDP-MurNAc-pentapeptide onto the lipid carrier undecaprenyl phosphate, yielding undecaprenyl-pyrophosphoryl-MurNAc-pentapeptide, known as lipid I. The protein is Phospho-N-acetylmuramoyl-pentapeptide-transferase of Colwellia psychrerythraea (strain 34H / ATCC BAA-681) (Vibrio psychroerythus).